The sequence spans 264 residues: Enhancer of mRNA-decapping protein 1 (264 aa).

Disordered regions lie at residues 1-180 (MLAQ…FSTI) and 193-264 (YNNP…LRDY). Residues 63 to 74 (GKKSTSKPKSKS) show a composition bias toward basic residues. Over residues 83–92 (NFKLTASPSL) the composition is skewed to polar residues. The segment covering 108–118 (PSPPPPPPPST) has biased composition (pro residues). Composition is skewed to low complexity over residues 119-134 (QPST…RTST), 161-172 (NGKKPNFFNNNN), and 208-226 (NNNN…NSNS). Polar residues predominate over residues 248 to 264 (FKSNNGSPRQSSGLRDY).

Belongs to the EDC family.

It localises to the cytoplasm. MRNA-binding protein which stimulates mRNA decapping. This chain is Enhancer of mRNA-decapping protein 1 (EDC1), found in Candida albicans (strain SC5314 / ATCC MYA-2876) (Yeast).